We begin with the raw amino-acid sequence, 596 residues long: MMRKFHEITGTETGAVSGEAGTIGTRKVYVTGSRPDIRVPMKEIVQKVGAQDESGTELLKIYLYDTSGPFTDPGAAVNIRAGLPAMREAWIEERHDSMVLSQLSSEYGRQRLAGRVEGGQYFPEERLPRRAGKGCNVTQMHYARKGIVTPEMEYIAIRENQRRESLPELLKKQHPGDPRGTRMPQVITPEYVRDEVAAGRAVIPCNINHPECEPMIIGRNFLVKINANIGNSAMSSSIDEEVEKMIWAIRWGGDTVMDLSTGVDIHETREWIIRNSPVPIGTVPIYQALEKVGGQAEELSWEIFRDTLIEQAEQGVDYFTIHAGVRSNLLEAAQRRLTGIVSRGGSIMTKWCKAHGQESFLYTRFEEICEIAKAYDVTFSLGDGLRPGSIYDANDEAQIEELKTLGELTETAWRHDVQVMIEGPGHVPMHMIQENMDLQLKYCHGAPFYTLGPLVTDIAPGYDHITSAIGGTMMAWCGTAMLCYVTPKEHLGLPDKNDVREGIVAHKIAAHAADLAKGHPGAQARDNALSKARFEFRWQDQFALGLDPERAMGIRKALLPEDAEDKEQYCTMCGPDFCSMKITRSLREGAAGGKEE.

Substrate contacts are provided by residues asparagine 228, methionine 257, tyrosine 286, histidine 322, 342-344 (SRG), 383-386 (DGLR), and glutamate 422. Residue histidine 426 coordinates Zn(2+). A substrate-binding site is contributed by tyrosine 449. Histidine 490 is a Zn(2+) binding site. Positions 570, 573, and 578 each coordinate [4Fe-4S] cluster.

The protein belongs to the ThiC family. In terms of assembly, homodimer. It depends on [4Fe-4S] cluster as a cofactor.

It catalyses the reaction 5-amino-1-(5-phospho-beta-D-ribosyl)imidazole + S-adenosyl-L-methionine = 4-amino-2-methyl-5-(phosphooxymethyl)pyrimidine + CO + 5'-deoxyadenosine + formate + L-methionine + 3 H(+). Its pathway is cofactor biosynthesis; thiamine diphosphate biosynthesis. Catalyzes the synthesis of the hydroxymethylpyrimidine phosphate (HMP-P) moiety of thiamine from aminoimidazole ribotide (AIR) in a radical S-adenosyl-L-methionine (SAM)-dependent reaction. This chain is Phosphomethylpyrimidine synthase 1, found in Syntrophotalea carbinolica (strain DSM 2380 / NBRC 103641 / GraBd1) (Pelobacter carbinolicus).